The primary structure comprises 186 residues: Ribosome-recycling factor (186 aa).

The protein belongs to the RRF family.

It is found in the cytoplasm. Responsible for the release of ribosomes from messenger RNA at the termination of protein biosynthesis. May increase the efficiency of translation by recycling ribosomes from one round of translation to another. The polypeptide is Ribosome-recycling factor (Burkholderia cenocepacia (strain HI2424)).